We begin with the raw amino-acid sequence, 650 residues long: Amyloid beta precursor like protein 1 (650 aa).

An N-terminal signal peptide occupies residues 1–38; the sequence is MGPASPAARGLSRRPGQPPLPLLLPLLLLLLRAQPAIG. Residues 39-580 lie on the Extracellular side of the membrane; the sequence is SLAGGSPGAA…APAGTGVSRE (542 aa). Residues 50–146 are GFLD subdomain; the sequence is APGSAQVAGL…PFRCLPGEFV (97 aa). The E1 domain maps to 50–212; it reads APGSAQVAGL…RGVEYVCCPP (163 aa). Cystine bridges form between Cys60-Cys84, Cys95-Cys140, Cys120-Cys128, Cys156-Cys210, Cys167-Cys197, and Cys181-Cys209. The cuBD subdomain stretch occupies residues 154–212; the sequence is EGCRFLHQERMDQCESSTRRHQEAQEACSSQGLILHGSGMLLPCGSDRFRGVEYVCCPP. Position 174 (His174) interacts with Cu(2+). Residues Glu206, Cys209, and Cys210 each coordinate Zn(2+). The segment at 214 to 287 is disordered; that stretch reads GTPDPSGTAV…LAVVGKVTPT (74 aa). O-linked (GalNAc...) threonine glycosylation is present at Thr215. The O-linked (GalNAc...) serine glycan is linked to Ser227. The O-linked (GalNAc...) threonine glycan is linked to Thr228. The tract at residues 285 to 305 is O-glycosylated at three sites; it reads TPTPRPTDGVDIYFGMPGEIS. The region spanning 293 to 484 is the E2 domain; sequence GVDIYFGMPG…QELRPQIQEL (192 aa). Heparin-binding stretches follow at residues 310-342 and 410-441; these read FLRA…SKNL and LLAL…DPEK. The N-linked (GlcNAc...) asparagine glycan is linked to Asn337. Positions 442-459 are collagen-binding; that stretch reads AQQMRFQVHTHLQVIEER. Asn461 carries N-linked (GlcNAc...) asparagine glycosylation. The segment at 492–546 is disordered; sequence PSELEAPAPGGSSEDKGGLQPPDSKDDTPMTLPKGSTEQDAASPEKEKMNPLEQY. Composition is skewed to basic and acidic residues over residues 504-519 and 534-546; these read SEDK…KDDT and SPEK…LEQY. Asn551 carries N-linked (GlcNAc...) asparagine glycosylation. His561 provides a ligand contact to Cu(2+). His561 contributes to the Zn(2+) binding site. A helical membrane pass occupies residues 581–603; that stretch reads AVSGLLIMGAGGGSLIVLSMLLL. Residues 604 to 615 carry the Basolateral sorting signal motif; that stretch reads RRKKPYGAISHG. Residues 604-650 lie on the Cytoplasmic side of the membrane; that stretch reads RRKKPYGAISHGVVEVDPMLTLEEQQLRELQRHGYENPTYRFLEERP. The tract at residues 632–649 is interaction with DAB1; it reads ELQRHGYENPTYRFLEER. Positions 636 to 650 are interaction with DAB2; sequence HGYENPTYRFLEERP. A Clathrin-binding motif is present at residues 640–643; that stretch reads NPTY. The NPXY motif; contains endocytosis signal signature appears at 640–643; the sequence is NPTY.

The protein belongs to the APP family. As to quaternary structure, monomer and homodimer. Heparin binding promotes homodimerization. Binds, via its C-terminus, to the PID domain of several cytoplasmic proteins, including APBB and APBA family members, MAPK8IP1 and DAB1. Binding to Dab1 inhibits its serine phosphorylation. Interacts with CPEB1. Interacts (via NPXY motif) with DAB2 (via PID domain); the interaction is impaired by tyrosine phosphorylation of the NPXY motif. Interacts (via NPXY motif) with DAB1. In terms of processing, proteolytically cleaved by caspases during neuronal apoptosis. Cleaved, in vitro, at Asp-620 by caspase-3. N- and O-glycosylated. O-glycosylation with core 1 or possibly core 8 glycans. Glycosylation on Ser-227 is the preferred site to Thr-228. In terms of tissue distribution, expressed in the cerebral cortex where it is localized to the postsynaptic density (PSD).

Its subcellular location is the cell membrane. It is found in the cytoplasm. May play a role in postsynaptic function. The C-terminal gamma-secretase processed fragment, ALID1, activates transcription activation through APBB1 (Fe65) binding. Couples to JIP signal transduction through C-terminal binding. May interact with cellular G-protein signaling pathways. Can regulate neurite outgrowth through binding to components of the extracellular matrix such as heparin and collagen I. Its function is as follows. The gamma-CTF peptide, C30, is a potent enhancer of neuronal apoptosis. The protein is Amyloid beta precursor like protein 1 (APLP1) of Homo sapiens (Human).